Reading from the N-terminus, the 717-residue chain is uncharacterized protein (717 aa).

It belongs to the asfivirus C717R family.

The protein resides in the virion. This is an uncharacterized protein from Ornithodoros (relapsing fever ticks).